The primary structure comprises 890 residues: Protein translocase subunit SecA (890 aa).

Residues glutamine 85, 103-107 (GEGKT), and aspartate 491 contribute to the ATP site.

This sequence belongs to the SecA family. Monomer and homodimer. Part of the essential Sec protein translocation apparatus which comprises SecA, SecYEG and auxiliary proteins SecDF. Other proteins may also be involved.

The protein localises to the cell membrane. It localises to the cytoplasm. The catalysed reaction is ATP + H2O + cellular proteinSide 1 = ADP + phosphate + cellular proteinSide 2.. Functionally, part of the Sec protein translocase complex. Interacts with the SecYEG preprotein conducting channel. Has a central role in coupling the hydrolysis of ATP to the transfer of proteins into and across the cell membrane, serving as an ATP-driven molecular motor driving the stepwise translocation of polypeptide chains across the membrane. In Mycoplasmoides gallisepticum (strain R(low / passage 15 / clone 2)) (Mycoplasma gallisepticum), this protein is Protein translocase subunit SecA.